The sequence spans 280 residues: MELKKTAESLYSAKTDNHTVYQNSPEPRDSRDVKVFSLEGKQTRQEKTTSSKGNTRTESRKFADEEKRVDDEIAEVGSKEEEQESQEFCLAENAFAGMSLIDIAAAGSAEAVVEVAPIAVSSIDTQWIENIILSTVESMVISEINGEQLVELVLDASSSVPEAFVGANLTLVQSGQDLSVKFSSFVDATQMAEAADLVTNNPSQLSSLVSALKGHQLTLKEFSVGNLLVQLPKIEEVQTPLHMIASTIRHREEKDQRDQNQKQKQDDKEQDSYKIEEARL.

Disordered stretches follow at residues 1 to 83 (MELK…EEEQ) and 248 to 280 (IRHR…EARL). Polar residues predominate over residues 12 to 25 (SAKTDNHTVYQNSP). Composition is skewed to basic and acidic residues over residues 41–71 (KQTR…RVDD) and 249–280 (RHRE…EARL).

The protein belongs to the chlamydial CPn_0705/CT_671/TC_0042 family.

This is an uncharacterized protein from Chlamydia pneumoniae (Chlamydophila pneumoniae).